A 288-amino-acid chain; its full sequence is Bifunctional protein FolD 2 (288 aa).

NADP(+) is bound by residues glycine 166 to serine 168 and serine 191.

It belongs to the tetrahydrofolate dehydrogenase/cyclohydrolase family. In terms of assembly, homodimer.

It carries out the reaction (6R)-5,10-methylene-5,6,7,8-tetrahydrofolate + NADP(+) = (6R)-5,10-methenyltetrahydrofolate + NADPH. The catalysed reaction is (6R)-5,10-methenyltetrahydrofolate + H2O = (6R)-10-formyltetrahydrofolate + H(+). It participates in one-carbon metabolism; tetrahydrofolate interconversion. In terms of biological role, catalyzes the oxidation of 5,10-methylenetetrahydrofolate to 5,10-methenyltetrahydrofolate and then the hydrolysis of 5,10-methenyltetrahydrofolate to 10-formyltetrahydrofolate. This Frankia alni (strain DSM 45986 / CECT 9034 / ACN14a) protein is Bifunctional protein FolD 2.